The chain runs to 273 residues: Pantothenate synthetase (273 aa).

27-34 (MGALHAGH) provides a ligand contact to ATP. The Proton donor role is filled by His34. Gln58 lines the (R)-pantoate pocket. Gln58 is a beta-alanine binding site. Position 144 to 147 (144 to 147 (GKKD)) interacts with ATP. Gln150 is a binding site for (R)-pantoate. Residues Val173 and 181–184 (LSSR) each bind ATP.

The protein belongs to the pantothenate synthetase family. In terms of assembly, homodimer.

It localises to the cytoplasm. The enzyme catalyses (R)-pantoate + beta-alanine + ATP = (R)-pantothenate + AMP + diphosphate + H(+). It participates in cofactor biosynthesis; (R)-pantothenate biosynthesis; (R)-pantothenate from (R)-pantoate and beta-alanine: step 1/1. Catalyzes the condensation of pantoate with beta-alanine in an ATP-dependent reaction via a pantoyl-adenylate intermediate. The chain is Pantothenate synthetase from Campylobacter hominis (strain ATCC BAA-381 / DSM 21671 / CCUG 45161 / LMG 19568 / NCTC 13146 / CH001A).